Reading from the N-terminus, the 115-residue chain is MKSFSIFFCKLDNEMGNSLFELIFLLSLFNFKWYNLSTFSGVKFITGCLHVVCHSKSLESTVFRVVIPILHRIKSLSTHCLFFLPLVRTIDSSINSHFKSTVFSDMYDSKRLLYV.

This is an uncharacterized protein from Saccharomyces cerevisiae (strain ATCC 204508 / S288c) (Baker's yeast).